A 63-amino-acid chain; its full sequence is UPF0337 protein PSPTO_1596 (63 aa).

A disordered region spans residues 20–63 (KQAVGKATDNTKLQAEGKAQELKGEGQQAKGEVKDAVKKGVDKV). Over residues 50–63 (GEVKDAVKKGVDKV) the composition is skewed to basic and acidic residues.

The protein belongs to the UPF0337 (CsbD) family.

This chain is UPF0337 protein PSPTO_1596, found in Pseudomonas syringae pv. tomato (strain ATCC BAA-871 / DC3000).